The chain runs to 505 residues: Trans-cinnamate 4-monooxygenase (505 aa).

A helical transmembrane segment spans residues 3 to 23 (LLLLEKTLLGSFVAILVAILV). Residues 213-218 (RSRLAQ) and Ala306 contribute to the (E)-cinnamate site. Position 447 (Cys447) interacts with heme.

Belongs to the cytochrome P450 family. Heme is required as a cofactor.

It localises to the membrane. The enzyme catalyses (E)-cinnamate + reduced [NADPH--hemoprotein reductase] + O2 = (E)-4-coumarate + oxidized [NADPH--hemoprotein reductase] + H2O + H(+). It functions in the pathway phenylpropanoid metabolism; trans-4-coumarate biosynthesis; trans-4-coumarate from trans-cinnamate: step 1/1. Functionally, catalyzes the first oxidative step of the phenylpropanoid pathway in higher plants by transforming trans-cinnamate into p-coumarate. The compounds formed by this pathway are essential components for lignification, pollination, and defense against ultraviolet light, predators and pathogens. This chain is Trans-cinnamate 4-monooxygenase (CYP73A13), found in Populus tremuloides (Quaking aspen).